A 399-amino-acid polypeptide reads, in one-letter code: S-adenosylmethionine synthase (399 aa).

ATP is bound at residue His16. A Mg(2+)-binding site is contributed by Asp18. Glu44 serves as a coordination point for K(+). Residues Glu57 and Gln100 each contribute to the L-methionine site. The flexible loop stretch occupies residues 100 to 110 (QSSDIAQGVNE). ATP is bound by residues 177–179 (DAK), 244–245 (RF), Asp253, 259–260 (RK), Ala276, and Lys280. Asp253 lines the L-methionine pocket. Lys284 contributes to the L-methionine binding site.

The protein belongs to the AdoMet synthase family. Homotetramer; dimer of dimers. It depends on Mg(2+) as a cofactor. K(+) is required as a cofactor.

The protein localises to the cytoplasm. It catalyses the reaction L-methionine + ATP + H2O = S-adenosyl-L-methionine + phosphate + diphosphate. It participates in amino-acid biosynthesis; S-adenosyl-L-methionine biosynthesis; S-adenosyl-L-methionine from L-methionine: step 1/1. In terms of biological role, catalyzes the formation of S-adenosylmethionine (AdoMet) from methionine and ATP. The overall synthetic reaction is composed of two sequential steps, AdoMet formation and the subsequent tripolyphosphate hydrolysis which occurs prior to release of AdoMet from the enzyme. The polypeptide is S-adenosylmethionine synthase (Lactococcus lactis subsp. cremoris (strain MG1363)).